Here is a 159-residue protein sequence, read N- to C-terminus: Phosphopantetheine adenylyltransferase (159 aa).

Thr10 provides a ligand contact to substrate. ATP contacts are provided by residues 10–11 (TF) and His18. The substrate site is built by Lys42, Leu74, and Arg88. ATP contacts are provided by residues 89-91 (GLR), Glu99, and 124-130 (FAYVSSS).

This sequence belongs to the bacterial CoaD family. In terms of assembly, homohexamer. It depends on Mg(2+) as a cofactor.

Its subcellular location is the cytoplasm. It carries out the reaction (R)-4'-phosphopantetheine + ATP + H(+) = 3'-dephospho-CoA + diphosphate. It functions in the pathway cofactor biosynthesis; coenzyme A biosynthesis; CoA from (R)-pantothenate: step 4/5. Its function is as follows. Reversibly transfers an adenylyl group from ATP to 4'-phosphopantetheine, yielding dephospho-CoA (dPCoA) and pyrophosphate. This chain is Phosphopantetheine adenylyltransferase, found in Thioalkalivibrio sulfidiphilus (strain HL-EbGR7).